Consider the following 203-residue polypeptide: Large ribosomal subunit protein bL25 (203 aa).

Belongs to the bacterial ribosomal protein bL25 family. CTC subfamily. In terms of assembly, part of the 50S ribosomal subunit; part of the 5S rRNA/L5/L18/L25 subcomplex. Contacts the 5S rRNA. Binds to the 5S rRNA independently of L5 and L18.

Its function is as follows. This is one of the proteins that binds to the 5S RNA in the ribosome where it forms part of the central protuberance. This Paraburkholderia phymatum (strain DSM 17167 / CIP 108236 / LMG 21445 / STM815) (Burkholderia phymatum) protein is Large ribosomal subunit protein bL25.